The chain runs to 356 residues: Phosphoribosylformylglycinamidine cyclo-ligase (356 aa).

It belongs to the AIR synthase family.

It localises to the cytoplasm. It catalyses the reaction 2-formamido-N(1)-(5-O-phospho-beta-D-ribosyl)acetamidine + ATP = 5-amino-1-(5-phospho-beta-D-ribosyl)imidazole + ADP + phosphate + H(+). The protein operates within purine metabolism; IMP biosynthesis via de novo pathway; 5-amino-1-(5-phospho-D-ribosyl)imidazole from N(2)-formyl-N(1)-(5-phospho-D-ribosyl)glycinamide: step 2/2. This is Phosphoribosylformylglycinamidine cyclo-ligase from Nitrobacter hamburgensis (strain DSM 10229 / NCIMB 13809 / X14).